We begin with the raw amino-acid sequence, 362 residues long: Homeobox protein Nkx-2.3 (362 aa).

Disordered stretches follow at residues 126–149 and 203–222; these read EAAGDCKTSEDGERPKPRSRRKPR and QRQDKSLELGTHAPPPPPRR. The span at 132–141 shows a compositional bias: basic and acidic residues; the sequence is KTSEDGERPK. Residues 145–204 constitute a DNA-binding region (homeobox); that stretch reads RRKPRVLFSQAQVFELERRFKQQRYLSAPEREHLASSLKLTSTQVKIWFQNRRYKCKRQR.

This sequence belongs to the NK-2 homeobox family. Expressed in spleen and intestine. Also expressed in salivary gland and tongue.

It is found in the nucleus. Functionally, transcriptional regulator essential for normal development and functions of the small intestine and spleen. Activates directly MADCAM1 expression. Required for homing of lymphocytes in spleen and mucosa-associated lymphoid tissue. May have a role during pharyngeal organogenesis. This is Homeobox protein Nkx-2.3 (Nkx2-3) from Mus musculus (Mouse).